A 281-amino-acid chain; its full sequence is MRHAEGAAVSADPTQVLAFETDCHIFDGCGFPSPGLHSFLFEPLWGDHDSNLYFNKPMLLALLGSIVIVGFFWAAFRKPKVVPGKLQMVAEAGYDFIRRGVVYETIGKKEGEKYVPLVVSLFFFVWMMNLWSIIPVAQFPVTSIIAYPAVLAAIVYVTWITLTFKRQGFVGFFKNVTGYDKSLGPVLPLAMLIEFFSNILIRPFTHAVRLFANMFAGHTLLLLFTIASWYLLNGVGIAYAGVSFIMTVVMTAFELFIQALQAYVFVLLTCTYIQGAMAEHH.

7 helical membrane passes run 56–76 (KPML…WAAF), 117–137 (LVVS…IPVA), 144–164 (IIAY…TLTF), 181–201 (KSLG…NILI), 215–235 (FAGH…LNGV), 237–257 (IAYA…ELFI), and 259–279 (ALQA…AMAE).

The protein belongs to the ATPase A chain family. In terms of assembly, F-type ATPases have 2 components, CF(1) - the catalytic core - and CF(0) - the membrane proton channel. CF(1) has five subunits: alpha(3), beta(3), gamma(1), delta(1), epsilon(1). CF(0) has three main subunits: a(1), b(2) and c(9-12). The alpha and beta chains form an alternating ring which encloses part of the gamma chain. CF(1) is attached to CF(0) by a central stalk formed by the gamma and epsilon chains, while a peripheral stalk is formed by the delta and b chains.

The protein localises to the cell membrane. Key component of the proton channel; it plays a direct role in the translocation of protons across the membrane. The sequence is that of ATP synthase subunit a from Streptomyces lividans.